A 430-amino-acid chain; its full sequence is MFETFVNFFKTKEVRNKIFFTLAMLVIFKIGTYIPAPGVNPAAFDNNQGSQGVTDLLNTFGGGALKNFSIFAMGIMPYITASIVMQLLQMDIVPKFTEWAKQGDVGRKKLNNVTRYFAIILAFIQSIGMAFQFNNYLKGALIIDPSPMSYLLIAIVLTTGTAFLLWLGEQITQYGVGNGISIIIFAGILSTLPSSLIQFYQQAFVGQSDTTMAWLQVAGLVIGLVLLTMGAVYVLQAVRKIPIQYAKKQSTQRLGSNATYLPLKVNSAGVIPVIFAMAFFLLPRTLTMFFPKADWAQQIANTANPSSNIGMVIYIILIIAFTYFYAFVQVNPEKMSDNLKKQGSYVPGIRPGEQTKKYITKVLYRLTFVGSIFLAVIAILPILATKFMNLPQSIQVGGTSLLIVIGVAIETMKSLEAQVNQKEYKGFGGR.

Transmembrane regions (helical) follow at residues 18-38, 68-88, 117-137, 148-168, 179-199, 215-235, 270-290, 308-328, 368-388, and 390-410; these read IFFTLAMLVIFKIGTYIPAPG, FSIFAMGIMPYITASIVMQLL, FAIILAFIQSIGMAFQFNNYL, MSYLLIAIVLTTGTAFLLWLG, GISIIIFAGILSTLPSSLIQF, LQVAGLVIGLVLLTMGAVYVL, VIPVIFAMAFFLLPRTLTMFF, NIGMVIYIILIIAFTYFYAFV, FVGSIFLAVIAILPILATKFM, and LPQSIQVGGTSLLIVIGVAIE.

This sequence belongs to the SecY/SEC61-alpha family. As to quaternary structure, component of the Sec protein translocase complex. Heterotrimer consisting of SecY, SecE and SecG subunits. The heterotrimers can form oligomers, although 1 heterotrimer is thought to be able to translocate proteins. Interacts with the ribosome. Interacts with SecDF, and other proteins may be involved. Interacts with SecA.

It is found in the cell membrane. Its function is as follows. The central subunit of the protein translocation channel SecYEG. Consists of two halves formed by TMs 1-5 and 6-10. These two domains form a lateral gate at the front which open onto the bilayer between TMs 2 and 7, and are clamped together by SecE at the back. The channel is closed by both a pore ring composed of hydrophobic SecY resides and a short helix (helix 2A) on the extracellular side of the membrane which forms a plug. The plug probably moves laterally to allow the channel to open. The ring and the pore may move independently. This Staphylococcus carnosus (strain TM300) protein is Protein translocase subunit SecY.